We begin with the raw amino-acid sequence, 321 residues long: Low affinity immunoglobulin epsilon Fc receptor (321 aa).

The Cytoplasmic portion of the chain corresponds to 1–21 (MEEGQYSEIEELPRRRCCRRG). 2 S-palmitoyl cysteine lipidation sites follow: Cys-17 and Cys-18. Residues 22–47 (TQIVLLGLVTAALWAGLLTLLLLWHW) form a helical; Signal-anchor for type II membrane protein membrane-spanning segment. Residues 48-321 (DTTQSLKQLE…LPTPSAPLHS (274 aa)) lie on the Extracellular side of the membrane. The N-linked (GlcNAc...) asparagine glycan is linked to Asn-63. The disordered stretch occupies residues 66 to 85 (QVSKNLESHHGDQMAQKSQS). 3 repeats span residues 69–89 (KNLESHHGDQMAQKSQSTQIS), 90–110 (QELEELRAEQQRLKSQDLELS), and 111–131 (WNLNGLQADLSSFKSQELNER). Cystine bridges form between Cys-160/Cys-288, Cys-163/Cys-174, Cys-191/Cys-282, and Cys-259/Cys-273. The C-type lectin domain maps to 162–284 (TCPEKWINFQ…RKLGAWVCDR (123 aa)). Residues Glu-249, Thr-251, Asn-269, and Asp-270 each coordinate Ca(2+). Positions 290 to 321 (PPASEGSAESMGPDSRPDPDGRLPTPSAPLHS) are disordered. O-linked (Xyl...) (chondroitin sulfate) serine glycosylation is present at Ser-296.

Homotrimer. Interacts (via C-type lectin domain) with IGHE (via CH3 region); this interaction regulates IgE homeostasis. Interacts (via the C-terminus) with CR2/CD21 (via Sushi domain 1 and 2). In terms of processing, N- and O-glycosylated. Post-translationally, the secreted form sCD23 is produced by ADAM10-mediated ectodomain shedding. In terms of tissue distribution, detected in urine (at protein level).

The protein localises to the cell membrane. It localises to the secreted. Functionally, low-affinity receptor for immunoglobulin E (IgE) and CR2/CD21. Has essential roles in the regulation of IgE production and in the differentiation of B cells. On B cells, initiates IgE-dependent antigen uptake and presentation to T cells. On macrophages, upon IgE binding and antigen cross-linking induces intracellular killing of parasites through activation of L-Arginine-nitric oxide pathway. In Homo sapiens (Human), this protein is Low affinity immunoglobulin epsilon Fc receptor (FCER2).